The sequence spans 289 residues: GTPase Era (289 aa).

Residues 2–167 (KSGFVSIIGR…LDEICKLLPE (166 aa)) form the Era-type G domain. The tract at residues 10 to 17 (GRTNAGKS) is G1. 10 to 17 (GRTNAGKS) is a binding site for GTP. The tract at residues 36-40 (NATRR) is G2. The G3 stretch occupies residues 57–60 (DTPG). GTP-binding positions include 57–61 (DTPGL) and 116–119 (TKVD). The tract at residues 116 to 119 (TKVD) is G4. The segment at 146–148 (FST) is G5. Positions 194–274 (IYENLSDEIP…FLKLDVVVKK (81 aa)) constitute a KH type-2 domain.

Belongs to the TRAFAC class TrmE-Era-EngA-EngB-Septin-like GTPase superfamily. Era GTPase family. Monomer.

It localises to the cytoplasm. The protein localises to the cell inner membrane. Functionally, an essential GTPase that binds both GDP and GTP, with rapid nucleotide exchange. Plays a role in 16S rRNA processing and 30S ribosomal subunit biogenesis and possibly also in cell cycle regulation and energy metabolism. The sequence is that of GTPase Era from Campylobacter concisus (strain 13826).